A 73-amino-acid polypeptide reads, in one-letter code: MKSFYGILCVAVLMMFHLEMSESRSNFQMLLEDPDYLSLEKRCLNVGQKCTPGNNKCCHTYICSSLDSKCFYR.

The N-terminal stretch at 1–23 (MKSFYGILCVAVLMMFHLEMSES) is a signal peptide. Disulfide bonds link C43–C58, C50–C63, and C57–C70.

As to expression, expressed outside of acontia.

Its subcellular location is the secreted. The protein localises to the nematocyst. Functionally, putative neurotoxin. The sequence is that of Putative neurotoxin NaH-Cpp1a from Calliactis polypus (Hermit crab anemone).